A 201-amino-acid polypeptide reads, in one-letter code: Probable GTP-binding protein EngB (201 aa).

Residues 22-197 (RLPEYAFIGR…LDYIDSINQE (176 aa)) form the EngB-type G domain. GTP-binding positions include 30 to 37 (GRSNVGKS), 57 to 61 (GKTQL), 75 to 78 (DLPG), 142 to 145 (TKAD), and 173 to 178 (VFITSS). Mg(2+) is bound by residues Ser37 and Thr59.

This sequence belongs to the TRAFAC class TrmE-Era-EngA-EngB-Septin-like GTPase superfamily. EngB GTPase family. Mg(2+) is required as a cofactor.

In terms of biological role, necessary for normal cell division and for the maintenance of normal septation. The polypeptide is Probable GTP-binding protein EngB (Porphyromonas gingivalis (strain ATCC 33277 / DSM 20709 / CIP 103683 / JCM 12257 / NCTC 11834 / 2561)).